Here is a 393-residue protein sequence, read N- to C-terminus: G protein-activated inward rectifier potassium channel 3 (393 aa).

The tract at residues 1–23 (MAQENAAFSPGQEEPPRRRGRQR) is disordered. Topologically, residues 1-57 (MAQENAAFSPGQEEPPRRRGRQRYVEKDGRCNVQQGNVRETYRYLTDLFTTLVDLQW) are cytoplasmic. The helical transmembrane segment at 58-82 (RLSLLFFVLAYALTWLFFGAIWWLI) threads the bilayer. The Extracellular portion of the chain corresponds to 83 to 106 (AYGRGDLEHLEDTAWTPCVNNLNG). Positions 107–118 (FVAAFLFSIETE) form an intramembrane region, helical; Pore-forming. The pore-forming intramembrane region spans 119 to 125 (TTIGYGH). The Selectivity filter signature appears at 120 to 125 (TIGYGH). Over 126–134 (RVITDQCPE) the chain is Extracellular. A helical transmembrane segment spans residues 135 to 156 (GIVLLLLQAILGSMVNAFMVGC). The Cytoplasmic segment spans residues 157–393 (MFVKISQPNK…LPPPESESKV (237 aa)). Residues 360 to 393 (KVEEEGAGEGAGGEAGADKEQNGCLPPPESESKV) form a disordered region. Over residues 384-393 (LPPPESESKV) the composition is skewed to pro residues. The short motif at 390 to 393 (ESKV) is the PDZ-binding element.

It belongs to the inward rectifier-type potassium channel (TC 1.A.2.1) family. KCNJ9 subfamily. As to quaternary structure, associates with KCNJ3/GIRK1 to form a G-protein-activated heteromultimer pore-forming unit. Interacts (via PDZ-binding motif) with SNX27 (via PDZ domain); the interaction is required when endocytosed to prevent degradation in lysosomes and promote recycling to the plasma membrane.

The protein resides in the membrane. It carries out the reaction K(+)(in) = K(+)(out). Functionally, inward rectifier potassium channels are characterized by a greater tendency to allow potassium to flow into the cell rather than out of it. Their voltage dependence is regulated by the concentration of extracellular potassium; as external potassium is raised, the voltage range of the channel opening shifts to more positive voltages. The inward rectification is mainly due to the blockage of outward current by internal magnesium, This receptor is controlled by G proteins. Unable to produce channel activity when expressed alone. Forms a functional channel in association with KCNJ3/GIRK1. The polypeptide is G protein-activated inward rectifier potassium channel 3 (KCNJ9) (Homo sapiens (Human)).